We begin with the raw amino-acid sequence, 482 residues long: Chromosomal replication initiator protein DnaA (482 aa).

The segment at 1 to 71 is domain I, interacts with DnaA modulators; sequence MKQSILFERV…TGLFQAEDPE (71 aa). Positions 71–139 are domain II; sequence EILKIEVLVR…ASFGSPLFGS (69 aa). The segment at 140–362 is domain III, AAA+ region; it reads PLDSRFTFDT…GAFNQLVFRR (223 aa). ATP is bound by residues Gly-186, Gly-188, Lys-189, and Thr-190. The domain IV, binds dsDNA stretch occupies residues 363–482; it reads SFEPNLSIER…VELLKRLINE (120 aa).

This sequence belongs to the DnaA family. In terms of assembly, oligomerizes as a right-handed, spiral filament on DNA at oriC.

It is found in the cytoplasm. Plays an essential role in the initiation and regulation of chromosomal replication. ATP-DnaA binds to the origin of replication (oriC) to initiate formation of the DNA replication initiation complex once per cell cycle. Binds the DnaA box (a 9 base pair repeat at the origin) and separates the double-stranded (ds)DNA. Forms a right-handed helical filament on oriC DNA; dsDNA binds to the exterior of the filament while single-stranded (ss)DNA is stabiized in the filament's interior. The ATP-DnaA-oriC complex binds and stabilizes one strand of the AT-rich DNA unwinding element (DUE), permitting loading of DNA polymerase. After initiation quickly degrades to an ADP-DnaA complex that is not apt for DNA replication. Binds acidic phospholipids. The protein is Chromosomal replication initiator protein DnaA of Rhizobium johnstonii (strain DSM 114642 / LMG 32736 / 3841) (Rhizobium leguminosarum bv. viciae).